The primary structure comprises 226 residues: Lipoprotein-releasing system ATP-binding protein LolD (226 aa).

In terms of domain architecture, ABC transporter spans 5 to 225 (LELVEIERHF…TLKEKKIVEL (221 aa)). ATP is bound at residue 41–48 (APSGAGKS).

It belongs to the ABC transporter superfamily. Lipoprotein translocase (TC 3.A.1.125) family. In terms of assembly, the complex is composed of two ATP-binding proteins (LolD) and two transmembrane proteins (LolC and LolE).

Its subcellular location is the cell inner membrane. In terms of biological role, part of the ABC transporter complex LolCDE involved in the translocation of mature outer membrane-directed lipoproteins, from the inner membrane to the periplasmic chaperone, LolA. Responsible for the formation of the LolA-lipoprotein complex in an ATP-dependent manner. The chain is Lipoprotein-releasing system ATP-binding protein LolD from Bartonella quintana (strain Toulouse) (Rochalimaea quintana).